An 83-amino-acid chain; its full sequence is UPF0297 protein DSY2420 (83 aa).

The protein belongs to the UPF0297 family.

This is UPF0297 protein DSY2420 from Desulfitobacterium hafniense (strain Y51).